Consider the following 437-residue polypeptide: Replication factor C large subunit (437 aa).

Residue 48 to 55 (GPPGVGKT) coordinates ATP. A disordered region spans residues 410–437 (TQASKPTSEEKAEKSKKYYPKRSSSRKT). The span at 416 to 425 (TSEEKAEKSK) shows a compositional bias: basic and acidic residues. Positions 426–437 (KYYPKRSSSRKT) are enriched in basic residues.

The protein belongs to the activator 1 small subunits family. RfcL subfamily. As to quaternary structure, heteromultimer composed of small subunits (RfcS) and large subunits (RfcL).

Its function is as follows. Part of the RFC clamp loader complex which loads the PCNA sliding clamp onto DNA. This chain is Replication factor C large subunit, found in Sulfolobus acidocaldarius (strain ATCC 33909 / DSM 639 / JCM 8929 / NBRC 15157 / NCIMB 11770).